A 370-amino-acid polypeptide reads, in one-letter code: Probable neutral protease 2 homolog TRV_02539 (370 aa).

Positions M1–A19 are cleaved as a signal peptide. The propeptide occupies Y20–R188. 2 disulfides stabilise this stretch: C196–C267 and C274–C292. H316 serves as a coordination point for Zn(2+). Residue E317 is part of the active site. Zn(2+) contacts are provided by H320 and D331.

The protein belongs to the peptidase M35 family. The cofactor is Zn(2+).

It is found in the secreted. The enzyme catalyses Preferential cleavage of bonds with hydrophobic residues in P1'. Also 3-Asn-|-Gln-4 and 8-Gly-|-Ser-9 bonds in insulin B chain.. Its function is as follows. Probable secreted metalloprotease that shows high activities on basic nuclear substrates such as histone and protamine. May be involved in virulence. This Trichophyton verrucosum (strain HKI 0517) protein is Probable neutral protease 2 homolog TRV_02539.